A 172-amino-acid chain; its full sequence is 3-hydroxydecanoyl-[acyl-carrier-protein] dehydratase (172 aa).

Residue His-71 is part of the active site.

The protein belongs to the thioester dehydratase family. FabA subfamily. In terms of assembly, homodimer.

It is found in the cytoplasm. It carries out the reaction a (3R)-hydroxyacyl-[ACP] = a (2E)-enoyl-[ACP] + H2O. It catalyses the reaction (3R)-hydroxydecanoyl-[ACP] = (2E)-decenoyl-[ACP] + H2O. The enzyme catalyses (2E)-decenoyl-[ACP] = (3Z)-decenoyl-[ACP]. Its pathway is lipid metabolism; fatty acid biosynthesis. Functionally, necessary for the introduction of cis unsaturation into fatty acids. Catalyzes the dehydration of (3R)-3-hydroxydecanoyl-ACP to E-(2)-decenoyl-ACP and then its isomerization to Z-(3)-decenoyl-ACP. Can catalyze the dehydratase reaction for beta-hydroxyacyl-ACPs with saturated chain lengths up to 16:0, being most active on intermediate chain length. This is 3-hydroxydecanoyl-[acyl-carrier-protein] dehydratase from Erwinia tasmaniensis (strain DSM 17950 / CFBP 7177 / CIP 109463 / NCPPB 4357 / Et1/99).